The following is a 437-amino-acid chain: Endoplasmic reticulum protein SC65 (437 aa).

The first 18 residues, 1–18, serve as a signal peptide directing secretion; that stretch reads MARVAWGLLWLLLGSAGA. An N-linked (GlcNAc...) asparagine glycan is attached at Asn361. 2 stretches are compositionally biased toward acidic residues: residues 381–413 and 428–437; these read DEME…EEGM and AEAEPEPELA. The segment at 381 to 437 is disordered; sequence DEMELEETEPPLEPEDALSDAEFEGEGDYEEGMYADWWQEPDAKGDEAEAEPEPELA.

Belongs to the leprecan family. Interacts with PLOD1, P3H3 and PPIB. Identified in a complex with PLOD1 and P3H3. As to expression, detected in fibroblasts (at protein level). Detected in spleen, prostate, testis, ovary, colon, pancreas, kidney, placenta and heart.

The protein localises to the endoplasmic reticulum. Functionally, part of a complex composed of PLOD1, P3H3 and P3H4 that catalyzes hydroxylation of lysine residues in collagen alpha chains and is required for normal assembly and cross-linking of collagen fibrils. Required for normal bone density and normal skin stability via its role in hydroxylation of lysine residues in collagen alpha chains and in collagen fibril assembly. The polypeptide is Endoplasmic reticulum protein SC65 (Homo sapiens (Human)).